The sequence spans 500 residues: Oryzalexin D synthase (500 aa).

Residues 4-24 (SQMWLLWGALSVALFFYFSTL) traverse the membrane as a helical segment. Cys-442 contributes to the heme binding site.

The protein belongs to the cytochrome P450 family. It depends on heme as a cofactor.

It localises to the membrane. It catalyses the reaction ent-cassa-12,15-diene + reduced [NADPH--hemoprotein reductase] + O2 = ent-11beta-hydroxycassa-12,15-diene + oxidized [NADPH--hemoprotein reductase] + H2O + H(+). It carries out the reaction ent-sandaracopimaradien-3beta-ol + reduced [NADPH--hemoprotein reductase] + O2 = oryzalexin D + oxidized [NADPH--hemoprotein reductase] + H2O + H(+). Enzyme of the diterpenoid metabolism involved in the biosynthesis of both phytocassane and the oryzalexin class of phytoalexins. Can hydroxylate syn-pimaradiene, ent-pimaradiene, ent-sandaracopimaradiene, ent-isokaurene, ent-kaurene, and ent-cassadiene, but no activity with syn-stemodene, syn-stemarene, syn-labdatriene, C11-alpha-hydroxy-ent-cassadiene or syn-pimadien-19-oic acid as substrates. Hydroxylates 3-alpha-hydroxy-ent-sandaracopimaradiene at C-7-beta, resulting in a 3-alpha,7-beta-diol corresponding to oryzalexins D. The protein is Oryzalexin D synthase of Oryza sativa subsp. japonica (Rice).